Reading from the N-terminus, the 181-residue chain is MVEIMLLMPKKDWQWRYSDTYGVLSVSLGSEMEFLTPYKSKSLIPDALSELEFSVEHAKFYIDFIELLSKSLTISDAMKVQLALNGTAAHFLLKPQMPKSWFFDTSSMCVYSELGKVFQLKCRGAIAQVLVVETSIQASLVMLLSNELPLNDNKSLMQFECIKVMHDRLHPLKVSRAIAAA.

It belongs to the ZapC family. As to quaternary structure, interacts directly with FtsZ.

The protein localises to the cytoplasm. Contributes to the efficiency of the cell division process by stabilizing the polymeric form of the cell division protein FtsZ. Acts by promoting interactions between FtsZ protofilaments and suppressing the GTPase activity of FtsZ. This is Cell division protein ZapC from Shewanella woodyi (strain ATCC 51908 / MS32).